The primary structure comprises 256 residues: Tyrosine-protein kinase-interacting protein (256 aa).

Over residues 1 to 14 the composition is skewed to acidic residues; the sequence is MANEGEEIELTEFP. Residues 1 to 49 are disordered; sequence MANEGEEIELTEFPETEKERKDEEKLSSCSEETTNTSSSSGSDHVPVPI. Over 1–228 the chain is Cytoplasmic; that stretch reads MANEGEEIEL…DLKRLENKIN (228 aa). Basic and acidic residues predominate over residues 15–26; it reads ETEKERKDEEKL. The span at 27 to 42 shows a compositional bias: low complexity; the sequence is SSCSEETTNTSSSSGS. The residue at position 114 (Tyr114) is a Phosphotyrosine; by host LCK. Tyr127 carries the post-translational modification Phosphotyrosine; by host. The segment at 146–155 is CSKH/LBD2; the sequence is EDLQSFLEKY. Residues 162-183 form a disordered region; sequence PKRDLSATWDPGMPTPPLPPRP. The interval 174–183 is SH3B/LBD1; it reads MPTPPLPPRP. Positions 174–183 are enriched in pro residues; it reads MPTPPLPPRP. A helical membrane pass occupies residues 229-249; sequence VIICLVVVILAVLLLVTVLSI. The Extracellular segment spans residues 250–256; the sequence is LHIGMKS.

Binds host LCK, human WDR48 and human NXF1/TAP. Forms a complex with activated LCK and STAT1 and STAT3. Post-translationally, phosphorylation on Tyr-114 acts as a docking site for the recruitment of STATs 1 and 3.

It localises to the host cell membrane. Functionally, plays a critical role in virus induced T-cell transformation. Binds to T-cell-specific tyrosine kinase LCK SH2 and SH3 domains, thereby activating its kinase activity. Once phosphorylated by host LCK, forms a complex with at least STAT 1 and 3, resulting on the phosphorylation of STAT3 and presumably STAT1, and their migration into the nucleus to induce transcription of target genes. Stimulates host ILF3/NF-AT-90 activity. Association with host NXF1/TAP transduces the signal up-regulating surface expression of adhesion molecules as well as activating NF-kappa-B activity. Acts synergistically with StpC to stimulate NF-kappa-B activity and interleukin-2 gene expression. Activation of NF-kappa-B protects lymphocytes from apoptosis, thereby facilitating viral induced cell transformation. May cause down-regulation of host LCK and cell apoptosis when stably overexpressed ex vivo. Interaction with WDR48 induce degradation of T-cell receptor in a lysosome-dependent fashion, when both proteins are overexpressed. The biological effect of this interaction remains controversial since no T-cell receptor degradation is observed in infected cells. This is Tyrosine-protein kinase-interacting protein from Saimiri sciureus (Common squirrel monkey).